The sequence spans 594 residues: MDFLNKKIQKILFICILSFLIVNLTKSEISEVKDVSKFLSVGGGGTGGCQHPIYCNGTLLKTIQLTQVFNDSKTFVDMPMRTSIENVNELFNQLLLNTSKNGGPNKEELAAFLSENFYPAGYEVEPVTPVDWVPNPSFLDEITDPNLVDFARSIHGKWLELTRVFNTSGLCDGCYSSIPVNNPFVIAGSRFREFYYWDSYWIIQGLLVSDMTTTAKGMLRNFGDMITEFGFIPNGGRIYYLNRSQPPLFTQMVNKYFEATNGSDIEFLQEILPILDQEYQWWMTHRTTELTNGETGESVILNLYNVSNNSPRPESYYEDFTDAQSFSSVEEKDYFYSSIASGAESGWDFSSRWMSPSDNTNLTTIQTVDVVPVDLNSILYLNEKILSSFHRTLGNNSMAVYYQAQSESRVDAMQQVFFNEDTYQWNDYNLKTSTNNEAWYTSNILPLFADIQSSIDMDNQEIDLIFKSLANVLIAYPGGVPTSLISAQSLQWDGLNVWPPLQYWIIESIMTPNTTFSNMIGKNLIDRWITTNFCGWNSTLESEGGMMFEKYNANYIGVPGGGGEYVVQNGFGWTNGVDLYLLKKYGKSITLNSC.

The N-terminal stretch at 1–27 (MDFLNKKIQKILFICILSFLIVNLTKS) is a signal peptide. 4 N-linked (GlcNAc...) asparagine glycosylation sites follow: Asn-56, Asn-70, Asn-97, and Asn-166. Residues Arg-190, 197–198 (WD), and Asn-234 each bind substrate. A glycan (N-linked (GlcNAc...) asparagine) is linked at Asn-242. Residue 243–245 (RSQ) participates in substrate binding. Asn-261 and Asn-305 each carry an N-linked (GlcNAc...) asparagine glycan. Substrate contacts are provided by residues 312-314 (RPE) and Gly-346. Asp-348 (proton donor/acceptor) is an active-site residue. 4 N-linked (GlcNAc...) asparagine glycosylation sites follow: Asn-361, Asn-395, Asn-513, and Asn-537. Glu-549 functions as the Proton donor/acceptor in the catalytic mechanism. Position 564 (Glu-564) interacts with substrate.

Belongs to the glycosyl hydrolase 37 family.

The enzyme catalyses alpha,alpha-trehalose + H2O = alpha-D-glucose + beta-D-glucose. The chain is Trehalase (treh) from Dictyostelium discoideum (Social amoeba).